We begin with the raw amino-acid sequence, 328 residues long: DNA-directed RNA polymerase subunit alpha (328 aa).

An alpha N-terminal domain (alpha-NTD) region spans residues 1–244 (MEKFLKYEIK…EHLNPIVSVN (244 aa)). The interval 261–328 (KVKSFAKQIE…VQELGLKFRS (68 aa)) is alpha C-terminal domain (alpha-CTD).

It belongs to the RNA polymerase alpha chain family. In terms of assembly, homodimer. The RNAP catalytic core consists of 2 alpha, 1 beta, 1 beta' and 1 omega subunit. When a sigma factor is associated with the core the holoenzyme is formed, which can initiate transcription.

It carries out the reaction RNA(n) + a ribonucleoside 5'-triphosphate = RNA(n+1) + diphosphate. In terms of biological role, DNA-dependent RNA polymerase catalyzes the transcription of DNA into RNA using the four ribonucleoside triphosphates as substrates. This chain is DNA-directed RNA polymerase subunit alpha, found in Mycoplasma genitalium (strain ATCC 33530 / DSM 19775 / NCTC 10195 / G37) (Mycoplasmoides genitalium).